The following is a 425-amino-acid chain: MLDVKRIRNDFDALSEKLATRGVVAETLNELKELDVKRRELLIKSEELKAQRNIASDDIAQAKRNKEDASEQIAAMQKVSAEIKEIDAELAAIDEKLNTIIVTLPNIPNDSVPVGADEDENVEVRRWGTPRDFDFEVKAHWDLGEDLGILDWERGAKVTGSRFLFYKGLGARLERAIYNFMLDEHAKEGYTEMITPYMVNHDSMFGTGQYPKFKEDTFELDGTDYVLIPTAEVPLTNYYRGEILDGKELPIYFTALSPSFRSEAGSAGRDTRGLIRLHQFHKVEMVKFSKPEDSYDELEKMVVNAENILQKLNLPYRVITLCTGDMGFSAAKTYDLEVWIPAQNTYREISSCSNTEDFQARRAQIRYRDEADGKVKLLHTLNGSGLAVGRTVAAILENYQNEDGSVTIPEVLRPYMGGAEVILPK.

230–232 (TAE) is a binding site for L-serine. 261–263 (RSE) contributes to the ATP binding site. An L-serine-binding site is contributed by Glu284. 348–351 (EISS) is a binding site for ATP. Ser384 provides a ligand contact to L-serine.

It belongs to the class-II aminoacyl-tRNA synthetase family. Type-1 seryl-tRNA synthetase subfamily. As to quaternary structure, homodimer. The tRNA molecule binds across the dimer.

It is found in the cytoplasm. It carries out the reaction tRNA(Ser) + L-serine + ATP = L-seryl-tRNA(Ser) + AMP + diphosphate + H(+). The enzyme catalyses tRNA(Sec) + L-serine + ATP = L-seryl-tRNA(Sec) + AMP + diphosphate + H(+). Its pathway is aminoacyl-tRNA biosynthesis; selenocysteinyl-tRNA(Sec) biosynthesis; L-seryl-tRNA(Sec) from L-serine and tRNA(Sec): step 1/1. Its function is as follows. Catalyzes the attachment of serine to tRNA(Ser). Is also able to aminoacylate tRNA(Sec) with serine, to form the misacylated tRNA L-seryl-tRNA(Sec), which will be further converted into selenocysteinyl-tRNA(Sec). The sequence is that of Serine--tRNA ligase from Streptococcus thermophilus (strain ATCC BAA-491 / LMD-9).